Reading from the N-terminus, the 203-residue chain is Pyridoxine/pyridoxamine 5'-phosphate oxidase (203 aa).

Residues 51 to 56, 66 to 67, arginine 72, lysine 73, and glutamine 95 each bind FMN; these read RMVLLK and YT. Lysine 56 is a binding site for substrate. The substrate site is built by tyrosine 113, arginine 117, and serine 121. FMN contacts are provided by residues 130–131 and tryptophan 175; that span reads QS. 181–183 lines the substrate pocket; sequence RLH. Residue arginine 185 participates in FMN binding.

This sequence belongs to the pyridoxamine 5'-phosphate oxidase family. In terms of assembly, homodimer. It depends on FMN as a cofactor.

It catalyses the reaction pyridoxamine 5'-phosphate + O2 + H2O = pyridoxal 5'-phosphate + H2O2 + NH4(+). The enzyme catalyses pyridoxine 5'-phosphate + O2 = pyridoxal 5'-phosphate + H2O2. It participates in cofactor metabolism; pyridoxal 5'-phosphate salvage; pyridoxal 5'-phosphate from pyridoxamine 5'-phosphate: step 1/1. It functions in the pathway cofactor metabolism; pyridoxal 5'-phosphate salvage; pyridoxal 5'-phosphate from pyridoxine 5'-phosphate: step 1/1. Catalyzes the oxidation of either pyridoxine 5'-phosphate (PNP) or pyridoxamine 5'-phosphate (PMP) into pyridoxal 5'-phosphate (PLP). In Novosphingobium aromaticivorans (strain ATCC 700278 / DSM 12444 / CCUG 56034 / CIP 105152 / NBRC 16084 / F199), this protein is Pyridoxine/pyridoxamine 5'-phosphate oxidase.